The sequence spans 490 residues: Bifunctional protein HldE (490 aa).

Residues 1-330 (MERKEIESLF…AEIGHAHPDS (330 aa)) form a ribokinase region. ATP is bound at residue 205-208 (NRKE). The active site involves Asp-275. The interval 356–490 (FTNGCFDLLH…EKIRTGSIKE (135 aa)) is cytidylyltransferase.

In the N-terminal section; belongs to the carbohydrate kinase PfkB family. It in the C-terminal section; belongs to the cytidylyltransferase family. In terms of assembly, homodimer.

The enzyme catalyses D-glycero-beta-D-manno-heptose 7-phosphate + ATP = D-glycero-beta-D-manno-heptose 1,7-bisphosphate + ADP + H(+). The catalysed reaction is D-glycero-beta-D-manno-heptose 1-phosphate + ATP + H(+) = ADP-D-glycero-beta-D-manno-heptose + diphosphate. It functions in the pathway nucleotide-sugar biosynthesis; ADP-L-glycero-beta-D-manno-heptose biosynthesis; ADP-L-glycero-beta-D-manno-heptose from D-glycero-beta-D-manno-heptose 7-phosphate: step 1/4. The protein operates within nucleotide-sugar biosynthesis; ADP-L-glycero-beta-D-manno-heptose biosynthesis; ADP-L-glycero-beta-D-manno-heptose from D-glycero-beta-D-manno-heptose 7-phosphate: step 3/4. Functionally, catalyzes the phosphorylation of D-glycero-D-manno-heptose 7-phosphate at the C-1 position to selectively form D-glycero-beta-D-manno-heptose-1,7-bisphosphate. Its function is as follows. Catalyzes the ADP transfer from ATP to D-glycero-beta-D-manno-heptose 1-phosphate, yielding ADP-D-glycero-beta-D-manno-heptose. This Geotalea uraniireducens (strain Rf4) (Geobacter uraniireducens) protein is Bifunctional protein HldE.